The following is a 422-amino-acid chain: 2-(3-amino-3-carboxypropyl)histidine synthase subunit 1 (422 aa).

[4Fe-4S] cluster contacts are provided by C128, C234, and C363.

This sequence belongs to the DPH1/DPH2 family. DPH1 subfamily. As to quaternary structure, component of the 2-(3-amino-3-carboxypropyl)histidine synthase complex composed of DPH1, DPH2, DPH3 and a NADH-dependent reductase, predominantly CBR1. It depends on [4Fe-4S] cluster as a cofactor.

It localises to the cytoplasm. It catalyses the reaction L-histidyl-[translation elongation factor 2] + S-adenosyl-L-methionine = 2-[(3S)-amino-3-carboxypropyl]-L-histidyl-[translation elongation factor 2] + S-methyl-5'-thioadenosine + H(+). It functions in the pathway protein modification; peptidyl-diphthamide biosynthesis. Functionally, catalyzes the first step of diphthamide biosynthesis, a post-translational modification of histidine which occurs in elongation factor 2. DPH1 and DPH2 transfer a 3-amino-3-carboxypropyl (ACP) group from S-adenosyl-L-methionine (SAM) to a histidine residue, the reaction is assisted by a reduction system comprising DPH3 and a NADH-dependent reductase, predominantly CBR1. The polypeptide is 2-(3-amino-3-carboxypropyl)histidine synthase subunit 1 (DPH1) (Kluyveromyces lactis (strain ATCC 8585 / CBS 2359 / DSM 70799 / NBRC 1267 / NRRL Y-1140 / WM37) (Yeast)).